The sequence spans 374 residues: Chaperone protein DnaJ (374 aa).

The region spanning 4-68 (DYYEILGVSR…ETRNRYDRFG (65 aa)) is the J domain. Residues 133-215 (GGEKEIRIRH…CGGSGRRQET (83 aa)) form a CR-type zinc finger. Cys146, Cys149, Cys163, Cys166, Cys189, Cys192, Cys203, and Cys206 together coordinate Zn(2+). 4 CXXCXGXG motif repeats span residues 146–153 (CQTCKGSG), 163–170 (CTTCSGTG), 189–196 (CPTCDGAG), and 203–210 (CDVCGGSG).

The protein belongs to the DnaJ family. Homodimer. The cofactor is Zn(2+).

The protein localises to the cytoplasm. Its function is as follows. Participates actively in the response to hyperosmotic and heat shock by preventing the aggregation of stress-denatured proteins and by disaggregating proteins, also in an autonomous, DnaK-independent fashion. Unfolded proteins bind initially to DnaJ; upon interaction with the DnaJ-bound protein, DnaK hydrolyzes its bound ATP, resulting in the formation of a stable complex. GrpE releases ADP from DnaK; ATP binding to DnaK triggers the release of the substrate protein, thus completing the reaction cycle. Several rounds of ATP-dependent interactions between DnaJ, DnaK and GrpE are required for fully efficient folding. Also involved, together with DnaK and GrpE, in the DNA replication of plasmids through activation of initiation proteins. This chain is Chaperone protein DnaJ, found in Microcystis aeruginosa (strain NIES-843 / IAM M-2473).